Consider the following 244-residue polypeptide: Tubulin-folding cofactor B (244 aa).

Met-1 carries the post-translational modification N-acetylmethionine. Tyr-98 carries the post-translational modification Phosphotyrosine. Ser-110 bears the Phosphoserine mark. The CAP-Gly domain occupies 183–225; the sequence is GLTDFKPGYWIGIRYDEPLGKNDGSVNGKRYFECQAKYGAFVK. Position 219 is an N6-acetyllysine (Lys-219).

Belongs to the TBCB family. In terms of assembly, supercomplex made of cofactors A to E. Cofactors A and D function by capturing and stabilizing tubulin in a quasi-native conformation. Cofactor E binds to the cofactor D-tubulin complex; interaction with cofactor C then causes the release of tubulin polypeptides that are committed to the native state. Cofactors B and E can form a heterodimer which binds to alpha-tubulin and enhances their ability to dissociate tubulin heterodimers. Interacts with GAN. Interacts with DCTN1. In terms of processing, ubiquitinated in the presence of GAN which targets it for degradation by the proteasome. Phosphorylation by PAK1 is required for normal function.

The protein localises to the cytoplasm. Its subcellular location is the cytoskeleton. Functionally, binds to alpha-tubulin folding intermediates after their interaction with cytosolic chaperonin in the pathway leading from newly synthesized tubulin to properly folded heterodimer. Involved in regulation of tubulin heterodimer dissociation. May function as a negative regulator of axonal growth. This chain is Tubulin-folding cofactor B (TBCB), found in Bos taurus (Bovine).